A 327-amino-acid polypeptide reads, in one-letter code: tRNA uridine(34) hydroxylase (327 aa).

Positions 130-224 (LDEDTVVLDT…YGKDPEVQGE (95 aa)) constitute a Rhodanese domain. C184 serves as the catalytic Cysteine persulfide intermediate.

The protein belongs to the TrhO family.

The catalysed reaction is uridine(34) in tRNA + AH2 + O2 = 5-hydroxyuridine(34) in tRNA + A + H2O. Catalyzes oxygen-dependent 5-hydroxyuridine (ho5U) modification at position 34 in tRNAs. The sequence is that of tRNA uridine(34) hydroxylase from Streptococcus thermophilus (strain CNRZ 1066).